The primary structure comprises 392 residues: Chorismate synthase (392 aa).

Positions 39 and 45 each coordinate NADP(+). Residues 131 to 133 (RSS), 255 to 256 (NA), Gly-300, 315 to 319 (KPIPT), and Arg-341 each bind FMN.

Belongs to the chorismate synthase family. Homotetramer. It depends on FMNH2 as a cofactor.

The catalysed reaction is 5-O-(1-carboxyvinyl)-3-phosphoshikimate = chorismate + phosphate. Its pathway is metabolic intermediate biosynthesis; chorismate biosynthesis; chorismate from D-erythrose 4-phosphate and phosphoenolpyruvate: step 7/7. In terms of biological role, catalyzes the anti-1,4-elimination of the C-3 phosphate and the C-6 proR hydrogen from 5-enolpyruvylshikimate-3-phosphate (EPSP) to yield chorismate, which is the branch point compound that serves as the starting substrate for the three terminal pathways of aromatic amino acid biosynthesis. This reaction introduces a second double bond into the aromatic ring system. The sequence is that of Chorismate synthase from Leuconostoc mesenteroides subsp. mesenteroides (strain ATCC 8293 / DSM 20343 / BCRC 11652 / CCM 1803 / JCM 6124 / NCDO 523 / NBRC 100496 / NCIMB 8023 / NCTC 12954 / NRRL B-1118 / 37Y).